The primary structure comprises 246 residues: Mediator of RNA polymerase II transcription subunit 6 (246 aa).

A disordered region spans residues 193–246; it reads VQLKPGEKPVPVDQTKKEAEPIPETVKPEEKETTKNVQQTVSAKGPPEKRMRLQ. A compositionally biased stretch (basic and acidic residues) spans 206-226; sequence QTKKEAEPIPETVKPEEKETT. Lys208 participates in a covalent cross-link: Glycyl lysine isopeptide (Lys-Gly) (interchain with G-Cter in SUMO2). Residues Lys236 and Lys241 each carry the N6-acetyllysine modification.

It belongs to the Mediator complex subunit 6 family. Component of the Mediator complex, which is composed of MED1, MED4, MED6, MED7, MED8, MED9, MED10, MED11, MED12, MED13, MED13L, MED14, MED15, MED16, MED17, MED18, MED19, MED20, MED21, MED22, MED23, MED24, MED25, MED26, MED27, MED29, MED30, MED31, CCNC, CDK8 and CDC2L6/CDK11. The MED12, MED13, CCNC and CDK8 subunits form a distinct module termed the CDK8 module. Mediator containing the CDK8 module is less active than Mediator lacking this module in supporting transcriptional activation. Individual preparations of the Mediator complex lacking one or more distinct subunits have been variously termed ARC, CRSP, DRIP, PC2, SMCC and TRAP. Interacts with CTNNB1 and GLI3.

It localises to the nucleus. Component of the Mediator complex, a coactivator involved in the regulated transcription of nearly all RNA polymerase II-dependent genes. Mediator functions as a bridge to convey information from gene-specific regulatory proteins to the basal RNA polymerase II transcription machinery. Mediator is recruited to promoters by direct interactions with regulatory proteins and serves as a scaffold for the assembly of a functional preinitiation complex with RNA polymerase II and the general transcription factors. The sequence is that of Mediator of RNA polymerase II transcription subunit 6 (MED6) from Homo sapiens (Human).